A 94-amino-acid polypeptide reads, in one-letter code: ESAT-6-like protein EsxL (94 aa).

The protein belongs to the WXG100 family. ESAT-6 subfamily. Strongly interacts with EsxK to form a heterodimeric complex under reducing conditions.

The protein localises to the secreted. In Mycobacterium bovis (strain ATCC BAA-935 / AF2122/97), this protein is ESAT-6-like protein EsxL.